A 238-amino-acid polypeptide reads, in one-letter code: Ribonuclease PH (238 aa).

Phosphate contacts are provided by residues R86 and 124–126 (GTR).

The protein belongs to the RNase PH family. In terms of assembly, homohexameric ring arranged as a trimer of dimers.

It carries out the reaction tRNA(n+1) + phosphate = tRNA(n) + a ribonucleoside 5'-diphosphate. Functionally, phosphorolytic 3'-5' exoribonuclease that plays an important role in tRNA 3'-end maturation. Removes nucleotide residues following the 3'-CCA terminus of tRNAs; can also add nucleotides to the ends of RNA molecules by using nucleoside diphosphates as substrates, but this may not be physiologically important. Probably plays a role in initiation of 16S rRNA degradation (leading to ribosome degradation) during starvation. The protein is Ribonuclease PH of Histophilus somni (strain 2336) (Haemophilus somnus).